Consider the following 475-residue polypeptide: Ribulose bisphosphate carboxylase large chain (475 aa).

The propeptide occupies 1-2; that stretch reads MS. N-acetylproline is present on proline 3. At lysine 14 the chain carries N6,N6,N6-trimethyllysine. 2 residues coordinate substrate: asparagine 123 and threonine 173. Lysine 175 (proton acceptor) is an active-site residue. Substrate is bound at residue lysine 177. Positions 201, 203, and 204 each coordinate Mg(2+). Lysine 201 is modified (N6-carboxylysine). Catalysis depends on histidine 294, which acts as the Proton acceptor. Residues arginine 295, histidine 327, and serine 379 each contribute to the substrate site.

Belongs to the RuBisCO large chain family. Type I subfamily. As to quaternary structure, heterohexadecamer of 8 large chains and 8 small chains; disulfide-linked. The disulfide link is formed within the large subunit homodimers. Requires Mg(2+) as cofactor. Post-translationally, the disulfide bond which can form in the large chain dimeric partners within the hexadecamer appears to be associated with oxidative stress and protein turnover.

Its subcellular location is the plastid. The protein localises to the chloroplast. The catalysed reaction is 2 (2R)-3-phosphoglycerate + 2 H(+) = D-ribulose 1,5-bisphosphate + CO2 + H2O. The enzyme catalyses D-ribulose 1,5-bisphosphate + O2 = 2-phosphoglycolate + (2R)-3-phosphoglycerate + 2 H(+). In terms of biological role, ruBisCO catalyzes two reactions: the carboxylation of D-ribulose 1,5-bisphosphate, the primary event in carbon dioxide fixation, as well as the oxidative fragmentation of the pentose substrate in the photorespiration process. Both reactions occur simultaneously and in competition at the same active site. The chain is Ribulose bisphosphate carboxylase large chain from Quercus rubra (Northern red oak).